The chain runs to 3005 residues: Highly reducing polyketide synthase AFT9-1 (3005 aa).

In terms of domain architecture, Ketosynthase family 3 (KS3) spans 1-337 (MDPQQRLLLE…GTNAHAILER (337 aa)). Catalysis depends on for beta-ketoacyl synthase activity residues Cys-87, His-222, and His-260. The segment at 437 to 751 (VFTGQGAQWP…SYMSALVRGS (315 aa)) is malonyl-CoA:ACP transacylase (MAT) domain. Residues 821-936 (HDLLGLKMTD…GSVEVKYAAA (116 aa)) are N-terminal hotdog fold. Residues 821–1114 (HDLLGLKMTD…SGLELRRLAP (294 aa)) form a dehydratase (DH) domain region. Positions 821-1118 (HDLLGLKMTD…LRRLAPTGQP (298 aa)) constitute a PKS/mFAS DH domain. The active-site Proton acceptor; for dehydratase activity is His-853. Residues 963-1118 (IEKISSQELY…LRRLAPTGQP (156 aa)) form a C-terminal hotdog fold region. Residue Asp-1028 is the Proton donor; for dehydratase activity of the active site. Positions 1259 to 1445 (ADDSSKRCYD…MRKASLNMQL (187 aa)) are methyltransferase (CMet) domain. The segment at 1683–1985 (EFMKMPVFTE…QHHRNESTVL (303 aa)) is enoyl reductase (ER) (ER) domain. Residues 2008–2191 (ATYVVSGGRG…YMSLNVGTIE (184 aa)) form a ketoreductase (KR) domain region. Residues 2293-2375 (TRDFEKISQL…SLGAKVASRS (83 aa)) enclose the Carrier domain. Position 2335 is an O-(pantetheine 4'-phosphoryl)serine (Ser-2335).

It functions in the pathway mycotoxin biosynthesis. Its function is as follows. Highly reducing polyketide synthase; part of the gene clusters that mediate the biosynthesis of the host-selective toxins (HSTs) AF-toxins responsible for Alternaria black spot of strawberry disease by the strawberry pathotype. AF-toxin I and III are valine derivatives of 2,3-dyhydroxy-isovaleric acid and 2-hydroxy-isovaleric acid respectively, while AF II is an isoleucine derivative of 2-hydroxy-valeric acid. These derivatives are bound to a 9,10-epoxy-8-hydroxy-9-methyl-decatrienoic acid (EDA) moiety. On cellular level, AF-toxins affect plasma membrane of susceptible cells and cause a sudden increase in loss of K(+) after a few minutes of toxin treatment. The aldo-keto reductase AFTS1 catalyzes the conversion of 2-keto-isovaleric acid (2-KIV) to 2-hydroxy-isovaleric acid (2-HIV) by reduction of its ketone to an alcohol. The acyl-CoA ligase AFT1, the hydrolase AFT2 and the enoyl-CoA hydratases AFT3 and AFT6, but also the polyketide synthase AFT9, the acyl-CoA dehydrogenase AFT10, the cytochrome P450 monooxygenase AFT11 and the oxidoreductase AFT12 are all involved in the biosynthesis of the AK-, AF- and ACT-toxin common EDA structural moiety. The exact function of each enzyme, and of additional enzymes identified within the AF-toxin clusters have still to be determined. In Alternaria alternata (Alternaria rot fungus), this protein is Highly reducing polyketide synthase AFT9-1.